A 134-amino-acid chain; its full sequence is Probable thionin-2.4 (134 aa).

Positions 1 to 24 (MEGKTLIVSVLIMSLFMAQNQVDA) are cleaved as a signal peptide. 3 disulfides stabilise this stretch: C27-C64, C28-C56, and C40-C50. Positions 71–134 (DILENTGDAV…KGSMNAVENA (64 aa)) are cleaved as a propeptide — acidic domain.

Belongs to the plant thionin (TC 1.C.44) family.

Its subcellular location is the secreted. Its function is as follows. Thionins are small plant proteins which are toxic to animal cells. They seem to exert their toxic effect at the level of the cell membrane. Their precise function is not known. The protein is Probable thionin-2.4 of Arabidopsis thaliana (Mouse-ear cress).